Reading from the N-terminus, the 135-residue chain is NAD(P)H-quinone oxidoreductase subunit 3 (135 aa).

3 consecutive transmembrane segments (helical) span residues leucine 15–valine 35, methionine 79–valine 99, and leucine 104–alanine 124.

Belongs to the complex I subunit 3 family. As to quaternary structure, NDH-1 can be composed of about 15 different subunits; different subcomplexes with different compositions have been identified which probably have different functions.

It localises to the cellular thylakoid membrane. It catalyses the reaction a plastoquinone + NADH + (n+1) H(+)(in) = a plastoquinol + NAD(+) + n H(+)(out). The enzyme catalyses a plastoquinone + NADPH + (n+1) H(+)(in) = a plastoquinol + NADP(+) + n H(+)(out). Functionally, NDH-1 shuttles electrons from an unknown electron donor, via FMN and iron-sulfur (Fe-S) centers, to quinones in the respiratory and/or the photosynthetic chain. The immediate electron acceptor for the enzyme in this species is believed to be plastoquinone. Couples the redox reaction to proton translocation, and thus conserves the redox energy in a proton gradient. Cyanobacterial NDH-1 also plays a role in inorganic carbon-concentration. The chain is NAD(P)H-quinone oxidoreductase subunit 3 from Synechococcus sp. (strain CC9311).